A 228-amino-acid polypeptide reads, in one-letter code: Dolichyl-phosphate hexose transferase HVO_1613 (228 aa).

It belongs to the glycosyltransferase 2 family.

Its function is as follows. Glycosyltransferase that adds a monosaccharide to dolichol phosphate, thereby being responsible for generating one of the three monosaccharide-modified dolichol phosphates. The subunit onto which additional sugars are added is not known. In Haloferax volcanii (strain ATCC 29605 / DSM 3757 / JCM 8879 / NBRC 14742 / NCIMB 2012 / VKM B-1768 / DS2) (Halobacterium volcanii), this protein is Dolichyl-phosphate hexose transferase HVO_1613.